Reading from the N-terminus, the 322-residue chain is Prephenate dehydratase (322 aa).

The region spanning 5–191 (RIAYLGPEGT…ARTRFVLVGM (187 aa)) is the Prephenate dehydratase domain. One can recognise an ACT domain in the interval 205 to 282 (SAVLRIDNAP…ADVCYLGSWP (78 aa)). The segment at 286–322 (ATGPTVSPPPPDEASRWLARLRAGKPDQASEPGGGKL) is disordered.

As to quaternary structure, homodimer.

It catalyses the reaction prephenate + H(+) = 3-phenylpyruvate + CO2 + H2O. The protein operates within amino-acid biosynthesis; L-phenylalanine biosynthesis; phenylpyruvate from prephenate: step 1/1. This chain is Prephenate dehydratase (pheA), found in Mycobacterium leprae (strain Br4923).